The sequence spans 654 residues: Cysteine-rich receptor-like protein kinase 40 (654 aa).

The first 27 residues, 1–27, serve as a signal peptide directing secretion; sequence MGKCSALMIFLSSSLLLVLQTLHVVNA. Gnk2-homologous domains are found at residues 28–131 and 143–250; these read VKCF…NQST and WPSP…LYSF. Residues 28–287 lie on the Extracellular side of the membrane; it reads VKCFGNSFNG…VKKGKSIGYG (260 aa). Residues N38, N65, N128, N154, N167, and N256 are each glycosylated (N-linked (GlcNAc...) asparagine). The chain crosses the membrane as a helical span at residues 288–308; the sequence is GIIAIVVVFTFINLLVFIGFI. The Cytoplasmic segment spans residues 309 to 654; it reads KVYARRGKLN…DDVFTELSCR (346 aa). A Protein kinase domain is found at 348-619; the sequence is FSSENTLGQG…VIIWLGSETI (272 aa). ATP contacts are provided by residues 354–362 and K376; that span reads LGQGGFGTV. Y421 bears the Phosphotyrosine mark. Catalysis depends on D473, which acts as the Proton acceptor. Position 477 is a phosphoserine (S477). Position 513 is a phosphothreonine (T513). A Phosphotyrosine modification is found at Y521.

It belongs to the protein kinase superfamily. Ser/Thr protein kinase family. CRK subfamily.

Its subcellular location is the membrane. It carries out the reaction L-seryl-[protein] + ATP = O-phospho-L-seryl-[protein] + ADP + H(+). The catalysed reaction is L-threonyl-[protein] + ATP = O-phospho-L-threonyl-[protein] + ADP + H(+). This chain is Cysteine-rich receptor-like protein kinase 40 (CRK40), found in Arabidopsis thaliana (Mouse-ear cress).